The following is an 89-amino-acid chain: Co-chaperonin GroES (89 aa).

This sequence belongs to the GroES chaperonin family. Heptamer of 7 subunits arranged in a ring. Interacts with the chaperonin GroEL.

The protein resides in the cytoplasm. Its function is as follows. Together with the chaperonin GroEL, plays an essential role in assisting protein folding. The GroEL-GroES system forms a nano-cage that allows encapsulation of the non-native substrate proteins and provides a physical environment optimized to promote and accelerate protein folding. GroES binds to the apical surface of the GroEL ring, thereby capping the opening of the GroEL channel. The polypeptide is Co-chaperonin GroES (Parabacteroides distasonis (strain ATCC 8503 / DSM 20701 / CIP 104284 / JCM 5825 / NCTC 11152)).